We begin with the raw amino-acid sequence, 373 residues long: Chaperone protein DnaJ (373 aa).

One can recognise a J domain in the interval 4-68; the sequence is DYYEILGLTK…VKREQYNQFG (65 aa). The segment at 142 to 224 adopts a CR-type zinc-finger fold; the sequence is GKEIVEPLEK…CKGKTHTKTT (83 aa). Residues Cys-155, Cys-158, Cys-172, Cys-175, Cys-198, Cys-201, Cys-212, and Cys-215 each contribute to the Zn(2+) site. CXXCXGXG motif repeat units lie at residues 155 to 162, 172 to 179, 198 to 205, and 212 to 219; these read CNTCNGSG, CTQCSGMG, CSKCNGIG, and CLICKGKT.

The protein belongs to the DnaJ family. As to quaternary structure, homodimer. Zn(2+) serves as cofactor.

It localises to the cytoplasm. Its function is as follows. Participates actively in the response to hyperosmotic and heat shock by preventing the aggregation of stress-denatured proteins and by disaggregating proteins, also in an autonomous, DnaK-independent fashion. Unfolded proteins bind initially to DnaJ; upon interaction with the DnaJ-bound protein, DnaK hydrolyzes its bound ATP, resulting in the formation of a stable complex. GrpE releases ADP from DnaK; ATP binding to DnaK triggers the release of the substrate protein, thus completing the reaction cycle. Several rounds of ATP-dependent interactions between DnaJ, DnaK and GrpE are required for fully efficient folding. Also involved, together with DnaK and GrpE, in the DNA replication of plasmids through activation of initiation proteins. This Mycoplasma mobile (strain ATCC 43663 / 163K / NCTC 11711) (Mesomycoplasma mobile) protein is Chaperone protein DnaJ.